The following is a 301-amino-acid chain: GTPase Era (301 aa).

The Era-type G domain occupies 7–175 (YCGFIAIVGR…AAIVRKHLPE (169 aa)). Residues 15 to 22 (GRPNVGKS) are G1. 15-22 (GRPNVGKS) is a GTP binding site. The G2 stretch occupies residues 41 to 45 (QTTRH). The segment at 62-65 (DTPG) is G3. GTP is bound by residues 62 to 66 (DTPGL) and 124 to 127 (NKVD). The interval 124-127 (NKVD) is G4. A G5 region spans residues 154–156 (ISA). In terms of domain architecture, KH type-2 spans 206–283 (LGAELPYSVT…HLELWVKVKS (78 aa)).

Belongs to the TRAFAC class TrmE-Era-EngA-EngB-Septin-like GTPase superfamily. Era GTPase family. As to quaternary structure, monomer.

The protein localises to the cytoplasm. It is found in the cell inner membrane. In terms of biological role, an essential GTPase that binds both GDP and GTP, with rapid nucleotide exchange. Plays a role in 16S rRNA processing and 30S ribosomal subunit biogenesis and possibly also in cell cycle regulation and energy metabolism. This chain is GTPase Era, found in Shigella dysenteriae serotype 1 (strain Sd197).